Reading from the N-terminus, the 480-residue chain is Protein nucleotidyltransferase YdiU (480 aa).

ATP contacts are provided by Gly86, Gly88, Arg89, Lys109, Asp121, Gly122, Arg172, and Arg179. Catalysis depends on Asp248, which acts as the Proton acceptor. Asn249 and Asp258 together coordinate Mg(2+). Asp258 lines the ATP pocket.

The protein belongs to the SELO family. It depends on Mg(2+) as a cofactor. The cofactor is Mn(2+).

The enzyme catalyses L-seryl-[protein] + ATP = 3-O-(5'-adenylyl)-L-seryl-[protein] + diphosphate. It carries out the reaction L-threonyl-[protein] + ATP = 3-O-(5'-adenylyl)-L-threonyl-[protein] + diphosphate. It catalyses the reaction L-tyrosyl-[protein] + ATP = O-(5'-adenylyl)-L-tyrosyl-[protein] + diphosphate. The catalysed reaction is L-histidyl-[protein] + UTP = N(tele)-(5'-uridylyl)-L-histidyl-[protein] + diphosphate. The enzyme catalyses L-seryl-[protein] + UTP = O-(5'-uridylyl)-L-seryl-[protein] + diphosphate. It carries out the reaction L-tyrosyl-[protein] + UTP = O-(5'-uridylyl)-L-tyrosyl-[protein] + diphosphate. Functionally, nucleotidyltransferase involved in the post-translational modification of proteins. It can catalyze the addition of adenosine monophosphate (AMP) or uridine monophosphate (UMP) to a protein, resulting in modifications known as AMPylation and UMPylation. This Klebsiella pneumoniae subsp. pneumoniae (strain ATCC 700721 / MGH 78578) protein is Protein nucleotidyltransferase YdiU.